The sequence spans 334 residues: G-protein coupled receptor 12 (334 aa).

Residues 1 to 48 are Extracellular-facing; that stretch reads MNEDLKVNLSGLPRDYLDAAAAENISAAVSSRVPAVEPEPELVVNPWD. Residues Asn-8 and Asn-24 are each glycosylated (N-linked (GlcNAc...) asparagine). The helical transmembrane segment at 49 to 69 threads the bilayer; that stretch reads IVLCTSGTLISCENAIVVLII. At 70-77 the chain is on the cytoplasmic side; it reads FHNPSLRA. A helical membrane pass occupies residues 78 to 98; that stretch reads PMFLLIGSLALADLLAGIGLI. Residues 99–113 are Extracellular-facing; that stretch reads TNFVFAYLLQSEATK. A helical transmembrane segment spans residues 114 to 134; it reads LVTIGLIVASFSASVCSLLAI. Topologically, residues 135-158 are cytoplasmic; that stretch reads TVDRYLSLYYALTYHSERTVTFTY. The helical transmembrane segment at 159-179 threads the bilayer; the sequence is VMLVMLWGTSICLGLLPVMGW. At 180-199 the chain is on the extracellular side; it reads NCLRDESTCSVVRPLTKNNA. A helical transmembrane segment spans residues 200-220; it reads AILSVSFLFMFALMLQLYIQI. Topologically, residues 221–252 are cytoplasmic; that stretch reads CKIVMRHAHQIALQHHFLATSHYVTTRKGVST. A helical transmembrane segment spans residues 253–273; that stretch reads LAIILGTFAACWMPFTLYSLI. The Extracellular portion of the chain corresponds to 274–282; that stretch reads ADYTYPSIY. A helical transmembrane segment spans residues 283 to 303; sequence TYATLLPATYNSIINPVIYAF. Topologically, residues 304-334 are cytoplasmic; it reads RNQEIQKALCLICCGCIPSSLAQRARSPSDV. Cys-317 is lipidated: S-palmitoyl cysteine. Phosphoserine is present on residues Ser-330 and Ser-332.

The protein belongs to the G-protein coupled receptor 1 family.

The protein localises to the cell membrane. Its function is as follows. Promotes neurite outgrowth and blocks myelin inhibition in neurons. Receptor with constitutive G(s) signaling activity that stimulates cyclic AMP production. The sequence is that of G-protein coupled receptor 12 (GPR12) from Homo sapiens (Human).